The chain runs to 55 residues: Large ribosomal subunit protein bL33c (55 aa).

It belongs to the bacterial ribosomal protein bL33 family.

It localises to the plastid. The protein resides in the chloroplast. The protein is Large ribosomal subunit protein bL33c of Emiliania huxleyi (Coccolithophore).